We begin with the raw amino-acid sequence, 376 residues long: Chaperone protein DnaJ (376 aa).

The J domain maps to 5–69; sequence DYYEILGVDR…EKRARYDRFG (65 aa). Residues 135–217 form a CR-type zinc finger; that stretch reads GLETDIRVPH…CNGKGVVRKT (83 aa). 8 residues coordinate Zn(2+): C148, C151, C165, C168, C191, C194, C205, and C208. 4 CXXCXGXG motif repeats span residues 148 to 155, 165 to 172, 191 to 198, and 205 to 212; these read CPVCHGSR, CQTCGGSG, CPDCQGEG, and CSNCNGKG.

Belongs to the DnaJ family. As to quaternary structure, homodimer. Zn(2+) serves as cofactor.

The protein resides in the cytoplasm. Participates actively in the response to hyperosmotic and heat shock by preventing the aggregation of stress-denatured proteins and by disaggregating proteins, also in an autonomous, DnaK-independent fashion. Unfolded proteins bind initially to DnaJ; upon interaction with the DnaJ-bound protein, DnaK hydrolyzes its bound ATP, resulting in the formation of a stable complex. GrpE releases ADP from DnaK; ATP binding to DnaK triggers the release of the substrate protein, thus completing the reaction cycle. Several rounds of ATP-dependent interactions between DnaJ, DnaK and GrpE are required for fully efficient folding. Also involved, together with DnaK and GrpE, in the DNA replication of plasmids through activation of initiation proteins. This chain is Chaperone protein DnaJ, found in Methanothermobacter thermautotrophicus (strain ATCC 29096 / DSM 1053 / JCM 10044 / NBRC 100330 / Delta H) (Methanobacterium thermoautotrophicum).